The following is a 464-amino-acid chain: Protein FAM90A15 (464 aa).

Disordered regions lie at residues 1–42 (MMAR…DPRL), 70–389 (PATL…HDGA), and 415–437 (HSPEKPGAFLAQSPHVSEKSEAP). Basic and acidic residues-rich tracts occupy residues 74–89 (GKKEGKENLKPWKPRV) and 97–114 (NKDKGEKEERPRQQDPQR). The segment covering 180–197 (LASLSPLRKASLSSSSSL) has biased composition (low complexity).

Belongs to the FAM90 family.

In Homo sapiens (Human), this protein is Protein FAM90A15.